We begin with the raw amino-acid sequence, 579 residues long: YTH domain-containing family protein 2 (579 aa).

The segment at 1-45 is disordered; the sequence is MSASSLLEQRPKGQGNKVQNGSVHQKDGLNDDDFEPYLSPQARPN. S2 is modified (N-acetylserine). S2, S4, S5, S22, S39, and S196 each carry phosphoserine. Positions 2–384 are localization to mRNA processing bodies (P-bodies); it reads SASSLLEQRP…QAGSGSTPSE (383 aa). A disordered region spans residues 247-387; it reads AKQQPKLKTK…SGSTPSEPHP (141 aa). Over residues 291–316 the composition is skewed to polar residues; that stretch reads ALVQNIGQPTQGSPQPVGQQANNSPP. Residues 337 to 349 show a composition bias toward low complexity; the sequence is AQLSVQQQAAQPT. Residue S359 is modified to Phosphoserine. A compositionally biased stretch (gly residues) spans 359–371; that stretch reads SGFGHNGVDGNGV. The segment covering 372–383 has biased composition (polar residues); sequence GQSQAGSGSTPS. The interaction with m6A-containing mRNAs stretch occupies residues 385-579; it reads PHPVLEKLRS…VKKERQGRGK (195 aa). A Phosphoserine modification is found at S394. The region spanning 410–544 is the YTH domain; the sequence is GRVFIIKSYS…EKAKQVLKII (135 aa). RNA contacts are provided by residues 416 to 418, D422, 432 to 433, N462, W486, and W491; these read KSY and WC.

It belongs to the YTHDF family. YTHDF2 subfamily. Interacts with CNOT1; interaction is direct and promotes recruitment of the CCR4-NOT complex. Interacts with YTHDF3. Interacts with RIDA/HRSP12; interaction leads to recruitment of the ribonuclease P/MRP complex. Ubiquitinated by the SCF(SKP2) complex, leading to its degradation. Highly expressed in induced pluripotent stem cells (iPSCs) and down-regulated during neural differentiation.

It is found in the cytoplasm. The protein resides in the cytosol. The protein localises to the P-body. It localises to the stress granule. Its subcellular location is the nucleus. Functionally, specifically recognizes and binds N6-methyladenosine (m6A)-containing RNAs, and regulates their stability. M6A is a modification present at internal sites of mRNAs and some non-coding RNAs and plays a role in mRNA stability and processing. Acts as a regulator of mRNA stability by promoting degradation of m6A-containing mRNAs via interaction with the CCR4-NOT and ribonuclease P/MRP complexes, depending on the context. The YTHDF paralogs (YTHDF1, YTHDF2 and YTHDF3) share m6A-containing mRNAs targets and act redundantly to mediate mRNA degradation and cellular differentiation. M6A-containing mRNAs containing a binding site for RIDA/HRSP12 (5'-GGUUC-3') are preferentially degraded by endoribonucleolytic cleavage: cooperative binding of RIDA/HRSP12 and YTHDF2 to transcripts leads to recruitment of the ribonuclease P/MRP complex. Other m6A-containing mRNAs undergo deadenylation via direct interaction between YTHDF2 and CNOT1, leading to recruitment of the CCR4-NOT and subsequent deadenylation of m6A-containing mRNAs. Required maternally to regulate oocyte maturation: probably acts by binding to m6A-containing mRNAs, thereby regulating maternal transcript dosage during oocyte maturation, which is essential for the competence of oocytes to sustain early zygotic development. Also required during spermatogenesis: regulates spermagonial adhesion by promoting degradation of m6A-containing transcripts coding for matrix metallopeptidases. Also involved in hematopoietic stem cells specification by binding to m6A-containing mRNAs, leading to promote their degradation. Also acts as a regulator of neural development by promoting m6A-dependent degradation of neural development-related mRNA targets. Inhibits neural specification of induced pluripotent stem cells by binding to methylated neural-specific mRNAs and promoting their degradation, thereby restraining neural differentiation. Regulates circadian regulation of hepatic lipid metabolism: acts by promoting m6A-dependent degradation of PPARA transcripts. Regulates the innate immune response to infection by inhibiting the type I interferon response: acts by binding to m6A-containing IFNB transcripts and promoting their degradation. May also act as a promoter of cap-independent mRNA translation following heat shock stress: upon stress, relocalizes to the nucleus and specifically binds mRNAs with some m6A methylation mark at their 5'-UTR, protecting demethylation of mRNAs by FTO, thereby promoting cap-independent mRNA translation. Regulates mitotic entry by promoting the phase-specific m6A-dependent degradation of WEE1 transcripts. Promotes formation of phase-separated membraneless compartments, such as P-bodies or stress granules, by undergoing liquid-liquid phase separation upon binding to mRNAs containing multiple m6A-modified residues: polymethylated mRNAs act as a multivalent scaffold for the binding of YTHDF proteins, juxtaposing their disordered regions and thereby leading to phase separation. The resulting mRNA-YTHDF complexes then partition into different endogenous phase-separated membraneless compartments, such as P-bodies, stress granules or neuronal RNA granules. May also recognize and bind RNAs modified by C5-methylcytosine (m5C) and act as a regulator of rRNA processing. In terms of biological role, (Microbial infection) Promotes viral gene expression and replication of polyomavirus SV40: acts by binding to N6-methyladenosine (m6A)-containing viral RNAs. (Microbial infection) Promotes viral gene expression and virion production of kaposis sarcoma-associated herpesvirus (KSHV) at some stage of the KSHV life cycle (in iSLK.219 and iSLK.BAC16 cells). Acts by binding to N6-methyladenosine (m6A)-containing viral RNAs. The sequence is that of YTH domain-containing family protein 2 from Homo sapiens (Human).